The sequence spans 354 residues: DNA polymerase IV (354 aa).

Residues 6–187 (IIHVDCDCFY…LPVARLHGVG (182 aa)) enclose the UmuC domain. The Mg(2+) site is built by D10 and D105. Residue E106 is part of the active site.

The protein belongs to the DNA polymerase type-Y family. Monomer. Mg(2+) serves as cofactor.

It localises to the cytoplasm. It catalyses the reaction DNA(n) + a 2'-deoxyribonucleoside 5'-triphosphate = DNA(n+1) + diphosphate. Poorly processive, error-prone DNA polymerase involved in untargeted mutagenesis. Copies undamaged DNA at stalled replication forks, which arise in vivo from mismatched or misaligned primer ends. These misaligned primers can be extended by PolIV. Exhibits no 3'-5' exonuclease (proofreading) activity. May be involved in translesional synthesis, in conjunction with the beta clamp from PolIII. The chain is DNA polymerase IV from Pseudomonas putida (strain ATCC 47054 / DSM 6125 / CFBP 8728 / NCIMB 11950 / KT2440).